Here is an 836-residue protein sequence, read N- to C-terminus: Probable serine/threonine-protein kinase dyrk1 (836 aa).

Low complexity predominate over residues Gln-99–Gln-278. The tract at residues Gln-99–Asp-286 is disordered. A Protein kinase domain is found at Phe-304 to Phe-624. ATP-binding positions include Leu-310–Val-318 and Lys-333. Asp-432 acts as the Proton acceptor in catalysis. Disordered regions lie at residues Asp-627–Gln-697, Thr-718–Asn-767, and Asn-785–Ile-836. Over residues Ser-630–Gln-697 the composition is skewed to low complexity. The span at Thr-718–His-728 shows a compositional bias: polar residues. The span at Lys-729 to Pro-744 shows a compositional bias: basic and acidic residues. Positions Asn-785–Ser-816 are enriched in low complexity.

It belongs to the protein kinase superfamily. CMGC Ser/Thr protein kinase family. MNB/DYRK subfamily.

The catalysed reaction is L-seryl-[protein] + ATP = O-phospho-L-seryl-[protein] + ADP + H(+). It catalyses the reaction L-threonyl-[protein] + ATP = O-phospho-L-threonyl-[protein] + ADP + H(+). The enzyme catalyses L-tyrosyl-[protein] + ATP = O-phospho-L-tyrosyl-[protein] + ADP + H(+). This Dictyostelium discoideum (Social amoeba) protein is Probable serine/threonine-protein kinase dyrk1 (dyrk1).